We begin with the raw amino-acid sequence, 244 residues long: NAD reductase coq12 (244 aa).

Residues 131–158 (NPLMNSEKNSTSVEDLPGSNRTQQTSSH) form a disordered region. The segment covering 132–158 (PLMNSEKNSTSVEDLPGSNRTQQTSSH) has biased composition (polar residues).

The protein localises to the mitochondrion. The catalysed reaction is a reduced flavin + NAD(+) = an oxidized flavin + NADH + 2 H(+). Functionally, NADH-dependent flavin reductase that acts in the coenzyme Q biosynthetic pathway. Required for synthesis of the p-hydroxybenzoic acid (PHB) precursor to form a quinone backbone. The chain is NAD reductase coq12 from Schizosaccharomyces pombe (strain 972 / ATCC 24843) (Fission yeast).